Consider the following 131-residue polypeptide: Small ribosomal subunit protein uS8 (131 aa).

This sequence belongs to the universal ribosomal protein uS8 family. Part of the 30S ribosomal subunit. Contacts proteins S5 and S12.

One of the primary rRNA binding proteins, it binds directly to 16S rRNA central domain where it helps coordinate assembly of the platform of the 30S subunit. In Thiobacillus denitrificans (strain ATCC 25259 / T1), this protein is Small ribosomal subunit protein uS8.